A 462-amino-acid chain; its full sequence is Cysteine--tRNA ligase (462 aa).

Zn(2+) is bound at residue cysteine 30. A 'HIGH' region motif is present at residues 32–42 (MTVYDYCHVGH). Cysteine 214, histidine 239, and glutamate 243 together coordinate Zn(2+). A 'KMSKS' region motif is present at residues 271-275 (KMSKS). Residue lysine 274 participates in ATP binding.

It belongs to the class-I aminoacyl-tRNA synthetase family. As to quaternary structure, monomer. It depends on Zn(2+) as a cofactor.

It localises to the cytoplasm. It catalyses the reaction tRNA(Cys) + L-cysteine + ATP = L-cysteinyl-tRNA(Cys) + AMP + diphosphate. The protein is Cysteine--tRNA ligase of Cupriavidus necator (strain ATCC 17699 / DSM 428 / KCTC 22496 / NCIMB 10442 / H16 / Stanier 337) (Ralstonia eutropha).